The chain runs to 317 residues: DNA-directed RNA polymerase subunit alpha (317 aa).

An alpha N-terminal domain (alpha-NTD) region spans residues 1–230; it reads MIEIEMEKPK…EHLNLFITLT (230 aa). An alpha C-terminal domain (alpha-CTD) region spans residues 247-317; that stretch reads KEKVLEMTIE…LGLGLRPSDE (71 aa).

Belongs to the RNA polymerase alpha chain family. Homodimer. The RNAP catalytic core consists of 2 alpha, 1 beta, 1 beta' and 1 omega subunit. When a sigma factor is associated with the core the holoenzyme is formed, which can initiate transcription.

It catalyses the reaction RNA(n) + a ribonucleoside 5'-triphosphate = RNA(n+1) + diphosphate. DNA-dependent RNA polymerase catalyzes the transcription of DNA into RNA using the four ribonucleoside triphosphates as substrates. In Alkaliphilus oremlandii (strain OhILAs) (Clostridium oremlandii (strain OhILAs)), this protein is DNA-directed RNA polymerase subunit alpha.